The following is a 518-amino-acid chain: Cytochrome P450 monooxygenase psoD (518 aa).

Cysteine 442 is a binding site for heme.

The protein belongs to the cytochrome P450 family. The cofactor is heme.

Its pathway is secondary metabolite biosynthesis. Functionally, cytochrome P450 monooxygenase; part of the gene cluster that mediates the biosynthesis of pseurotin A, a competitive inhibitor of chitin synthase and an inducer of nerve-cell proliferation. The PKS-NRPS hybrid synthetase psoA is responsible for the biosynthesis of azaspirene, one of the first intermediates having the 1-oxa-7-azaspiro[4,4]-non-2-ene-4,6-dione core of pseurotin, via condensation of one acetyl-CoA, 4 malonyl-CoA, and a L-phenylalanine molecule. The dual-functional monooxygenase/methyltransferase psoF seems to be involved in the addition of the C3 methyl group onto the pseurotin scaffold. Azaspirene is then converted to synerazol through 4 steps including oxidation of C17 by the cytochrome P450 monooxygenase psoD, O-methylation of the hydroxy group of C8 by the methyltransferase psoC, and the trans-to-cis isomerization of the C13 olefin by the glutathione S-transferase psoE. The fourth step of synerazol production is performed by the dual-functional monooxygenase/methyltransferase psoF which seems to catalyze the epoxidation of the intermediate deepoxy-synerazol. Synerazol can be attacked by a water molecule nonenzymatically at two different positions to yield two diol products, pseurotin A and pseurotin D. The sequence is that of Cytochrome P450 monooxygenase psoD from Aspergillus fumigatus (strain ATCC MYA-4609 / CBS 101355 / FGSC A1100 / Af293) (Neosartorya fumigata).